A 561-amino-acid chain; its full sequence is Lysine--tRNA ligase (561 aa).

Residues Glu409 and Glu416 each contribute to the Mg(2+) site.

It belongs to the class-II aminoacyl-tRNA synthetase family. As to quaternary structure, homodimer. Mg(2+) serves as cofactor.

The protein resides in the cytoplasm. It carries out the reaction tRNA(Lys) + L-lysine + ATP = L-lysyl-tRNA(Lys) + AMP + diphosphate. In Trichormus variabilis (strain ATCC 29413 / PCC 7937) (Anabaena variabilis), this protein is Lysine--tRNA ligase.